A 101-amino-acid polypeptide reads, in one-letter code: Small ribosomal subunit protein bS18c (101 aa).

Basic residues predominate over residues 1–19 (MDKSKQPFHKTKRSFRRRL). The disordered stretch occupies residues 1–23 (MDKSKQPFHKTKRSFRRRLPPIG).

The protein belongs to the bacterial ribosomal protein bS18 family. As to quaternary structure, part of the 30S ribosomal subunit.

The protein localises to the plastid. Its subcellular location is the chloroplast. The protein is Small ribosomal subunit protein bS18c of Lemna minor (Common duckweed).